Here is a 254-residue protein sequence, read N- to C-terminus: 3-deoxy-manno-octulosonate cytidylyltransferase (254 aa).

It belongs to the KdsB family.

It is found in the cytoplasm. The enzyme catalyses 3-deoxy-alpha-D-manno-oct-2-ulosonate + CTP = CMP-3-deoxy-beta-D-manno-octulosonate + diphosphate. It functions in the pathway nucleotide-sugar biosynthesis; CMP-3-deoxy-D-manno-octulosonate biosynthesis; CMP-3-deoxy-D-manno-octulosonate from 3-deoxy-D-manno-octulosonate and CTP: step 1/1. The protein operates within bacterial outer membrane biogenesis; lipopolysaccharide biosynthesis. Activates KDO (a required 8-carbon sugar) for incorporation into bacterial lipopolysaccharide in Gram-negative bacteria. The polypeptide is 3-deoxy-manno-octulosonate cytidylyltransferase (Pseudomonas aeruginosa (strain ATCC 15692 / DSM 22644 / CIP 104116 / JCM 14847 / LMG 12228 / 1C / PRS 101 / PAO1)).